We begin with the raw amino-acid sequence, 288 residues long: Inorganic pyrophosphatase (288 aa).

Arg-80 contributes to the diphosphate binding site. 3 residues coordinate Mg(2+): Asp-117, Asp-122, and Asp-154. The interval 252-271 (TPSYSDAAAQEIPSASPAPA) is disordered. Residues 258 to 271 (AAAQEIPSASPAPA) are compositionally biased toward low complexity.

It belongs to the PPase family. Requires Mg(2+) as cofactor.

The protein localises to the cytoplasm. The catalysed reaction is diphosphate + H2O = 2 phosphate + H(+). The sequence is that of Inorganic pyrophosphatase (IPP1) from Candida albicans (strain SC5314 / ATCC MYA-2876) (Yeast).